The sequence spans 1279 residues: MTLTERLREKISRAFYNHGLLCASYPIPIILFTGFCILACCYPLLKLPLPGTGPVEFTTPVKDYSPPPVDSDRKQGEPTEQPEWYVGAPVAYVQQIFVKSSVFPWHKNLLAVDVFRSPLSRAFQLVEEIRNHVLRDSSGIRSLEELCLQVTDLLPGLRKLRNLLPEHGCLLLSPGNFWQNDWERFHADPDIIGTIHQHEPKTLQTSATLKDLLFGVPGKYSGVSLYTRKRMVSYTITLVFQHYHAKFLGSLRARLMLLHPSPNCSLRAESLVHVHFKEEIGVAELIPLVTTYIILFAYIYFSTRKIDMVKSKWGLALAAVVTVLSSLLMSVGLCTLFGLTPTLNGGEIFPYLVVVIGLENVLVLTKSVVSTPVDLEVKLRIAQGLSSESWSIMKNMATELGIILIGYFTLVPAIQEFCLFAVVGLVSDFFLQMLFFTTVLSIDIRRMELADLNKRLPPEACLPSAKPVGQPTRYERQLAVRPSTPHTITLQPSSFRNLRLPKRLRVVYFLARTRLAQRLIMAGTVVWIGILVYTDPAGLRNYLAAQVTEQSPLGEGALAPMPVPSGMLPPSHPDPAFSIFPPDAPKLPENQTSPGESPERGGPAEVVHDSPVPEVTWGPEDEELWRKLSFRHWPTLFSYYNITLAKRYISLLPVIPVTLRLNPREALEGRHPQDGRSAWPPPGPIPAGHWEAGPKGPGGVQAHGDVTLYKVAALGLATGIVLVLLLLCLYRVLCPRNYGQLGGGPGRRRRGELPCDDYGYAPPETEIVPLVLRGHLMDIECLASDGMLLVSCCLAGHVCVWDAQTGDCLTRIPRPGRQRRDSGVGSGLEAQESWERLSDGGKAGPEEPGDSPPLRHRPRGPPPPSLFGDQPDLTCLIDTNFSAQPRSSQPTQPEPRHRAVCGRSRDSPGYDFSCLVQRVYQEEGLAAVCTPALRPPSPGPVLSQAPEDEGGSPEKGSPSLAWAPSAEGSIWSLELQGNLIVVGRSSGRLEVWDAIEGVLCCSSEEVSSGITALVFLDKRIVAARLNGSLDFFSLETHTALSPLQFRGTPGRGSSPASPVYSSSDTVACHLTHTVPCAHQKPITALKAAAGRLVTGSQDHTLRVFRLEDSCCLFTLQGHSGAITTVYIDQTMVLASGGQDGAICLWDVLTGSRVSHVFAHRGDVTSLTCTTSCVISSGLDDLISIWDRSTGIKFYSIQQDLGCGASLGVISDNLLVTGGQGCVSFWDLNYGDLLQTVYLGKNSEAQPARQILVLDNAAIVCNFGSELSLVYVPSVLEKLD.

Residues 1–18 (MTLTERLREKISRAFYNH) lie on the Cytoplasmic side of the membrane. A helical transmembrane segment spans residues 19-39 (GLLCASYPIPIILFTGFCILA). Over 40 to 279 (CCYPLLKLPL…SLVHVHFKEE (240 aa)) the chain is Lumenal. The interval 46 to 284 (KLPLPGTGPV…HFKEEIGVAE (239 aa)) is loop-1. Positions 60–80 (PVKDYSPPPVDSDRKQGEPTE) are disordered. Residue Asn263 is glycosylated (N-linked (GlcNAc...) asparagine). The chain crosses the membrane as a helical span at residues 280–300 (IGVAELIPLVTTYIILFAYIY). An SSD domain is found at 284 to 442 (ELIPLVTTYI…MLFFTTVLSI (159 aa)). Residues 301–312 (FSTRKIDMVKSK) are Cytoplasmic-facing. Residues 313–333 (WGLALAAVVTVLSSLLMSVGL) form a helical membrane-spanning segment. Topologically, residues 334-344 (CTLFGLTPTLN) are lumenal. The helical transmembrane segment at 345–365 (GGEIFPYLVVVIGLENVLVLT) threads the bilayer. Over 366–401 (KSVVSTPVDLEVKLRIAQGLSSESWSIMKNMATELG) the chain is Cytoplasmic. The chain crosses the membrane as a helical span at residues 402–422 (IILIGYFTLVPAIQEFCLFAV). Position 423 (Val423) is a topological domain, lumenal. A helical membrane pass occupies residues 424–444 (GLVSDFFLQMLFFTTVLSIDI). At 445-518 (RRMELADLNK…FLARTRLAQR (74 aa)) the chain is on the cytoplasmic side. The short motif at 447–452 (MELADL) is the ER export signal element. Residues Lys454 and Lys466 each participate in a glycyl lysine isopeptide (Lys-Gly) (interchain with G-Cter in ubiquitin) cross-link. The helical transmembrane segment at 519-539 (LIMAGTVVWIGILVYTDPAGL) threads the bilayer. Residues 535-710 (DPAGLRNYLA…QAHGDVTLYK (176 aa)) are loop-7. Over 540-709 (RNYLAAQVTE…VQAHGDVTLY (170 aa)) the chain is Lumenal. The tract at residues 579 to 615 (IFPPDAPKLPENQTSPGESPERGGPAEVVHDSPVPEV) is disordered. N-linked (GlcNAc...) asparagine glycosylation is found at Asn590 and Asn641. The disordered stretch occupies residues 668 to 696 (EGRHPQDGRSAWPPPGPIPAGHWEAGPKG). Residues 710–730 (KVAALGLATGIVLVLLLLCLY) form a helical membrane-spanning segment. Over 731–1279 (RVLCPRNYGQ…YVPSVLEKLD (549 aa)) the chain is Cytoplasmic. Residues 731–1279 (RVLCPRNYGQ…YVPSVLEKLD (549 aa)) are interaction with SREBF2. Residues 771-811 (VLRGHLMDIECLASDGMLLVSCCLAGHVCVWDAQTGDCLTR) form a WD 1 repeat. The disordered stretch occupies residues 811 to 904 (RIPRPGRQRR…PRHRAVCGRS (94 aa)). Ser822, Ser838, and Ser851 each carry phosphoserine. The span at 877–891 (IDTNFSAQPRSSQPT) shows a compositional bias: polar residues. A phosphoserine mark is found at Ser907 and Ser937. The disordered stretch occupies residues 931 to 962 (PALRPPSPGPVLSQAPEDEGGSPEKGSPSLAW). 2 WD repeats span residues 952-1002 (SPEK…LCCS) and 1005-1042 (EVSS…ALSP). Residue Arg1051 is modified to Omega-N-methylarginine. 4 WD repeats span residues 1077 to 1114 (AHQK…CLFT), 1117 to 1155 (GHSG…RVSH), 1158 to 1195 (AHRG…KFYS), and 1197 to 1235 (QQDL…LLQT).

It belongs to the WD repeat SCAP family. As to quaternary structure, membrane region forms a homotetramer. Component of the SCAP-SREBP complex (composed of SCAP and SREBF1/SREBP1 or SREBF2/SREBP2); interacts with SREBF1/SREBP1 or SREBF2/SREBP2 through its C-terminal cytoplasmic domain. Forms a ternary complex with INSIG1 or INSIG2 through its transmembrane domains at high sterol concentrations. Interacts with PAQR3; the interaction anchors the SCAP-SREBP complex to the Golgi apparatus in low cholesterol conditions. Interacts with the SEC23-SEC24 complex in a SAR1-GTP-dependent manner through an ER export signal in its third cytoplasmic loop. Interacts with RNF139; the interaction inhibits the interaction of SCAP with SEC24B and hampering the ER to Golgi transport of the SCAP-SREBP complex. Interacts with SPRING1. Ubiquitinated at Lys-454 and Lys-466. RNF145 triggers ubiquitination of SCAP, likely inhibiting SCAP-SREBP complex transport to the Golgi apparatus and the subsequent processing/maturation of SREBF2/SREBP2.

The protein localises to the endoplasmic reticulum membrane. It localises to the golgi apparatus membrane. Its subcellular location is the cytoplasmic vesicle. It is found in the COPII-coated vesicle membrane. Its function is as follows. Escort protein required for cholesterol as well as lipid homeostasis. Regulates export of the SCAP-SREBP complex from the endoplasmic reticulum to the Golgi upon low cholesterol, thereby regulating the processing of sterol regulatory element-binding proteins (SREBPs) SREBF1/SREBP1 and SREBF2/SREBP2. At high sterol concentrations, formation of a ternary complex with INSIG (INSIG1 or INSIG2) leads to mask the ER export signal in SCAP, promoting retention of the complex in the endoplasmic reticulum. Low sterol concentrations trigger release of INSIG, a conformational change in the SSD domain of SCAP, unmasking of the ER export signal, promoting recruitment into COPII-coated vesicles and transport of the SCAP-SREBP to the Golgi: in the Golgi, SREBPs are then processed, releasing the transcription factor fragment of SREBPs from the membrane, its import into the nucleus and up-regulation of LDLR, INSIG1 and the mevalonate pathway. Binds cholesterol via its SSD domain. The chain is Sterol regulatory element-binding protein cleavage-activating protein from Homo sapiens (Human).